A 377-amino-acid chain; its full sequence is Succinyl-diaminopimelate desuccinylase (377 aa).

Histidine 67 contacts Zn(2+). Residue aspartate 69 is part of the active site. Aspartate 100 serves as a coordination point for Zn(2+). Catalysis depends on glutamate 134, which acts as the Proton acceptor. Positions 135, 163, and 349 each coordinate Zn(2+).

Belongs to the peptidase M20A family. DapE subfamily. As to quaternary structure, homodimer. Zn(2+) is required as a cofactor. Co(2+) serves as cofactor.

The catalysed reaction is N-succinyl-(2S,6S)-2,6-diaminopimelate + H2O = (2S,6S)-2,6-diaminopimelate + succinate. It functions in the pathway amino-acid biosynthesis; L-lysine biosynthesis via DAP pathway; LL-2,6-diaminopimelate from (S)-tetrahydrodipicolinate (succinylase route): step 3/3. In terms of biological role, catalyzes the hydrolysis of N-succinyl-L,L-diaminopimelic acid (SDAP), forming succinate and LL-2,6-diaminopimelate (DAP), an intermediate involved in the bacterial biosynthesis of lysine and meso-diaminopimelic acid, an essential component of bacterial cell walls. This is Succinyl-diaminopimelate desuccinylase from Glaesserella parasuis serovar 5 (strain SH0165) (Haemophilus parasuis).